Reading from the N-terminus, the 1291-residue chain is Ethylene-insensitive protein 2.2 (1291 aa).

6 helical membrane-spanning segments follow: residues 18–38 (ALPA…PGKW), 48–68 (FGFD…LCQY), 96–116 (FLGV…ILGI), 128–148 (LSTC…FATL), 155–175 (SFLS…GVLI), and 195–215 (SAFA…FFLH). Asn-227 carries an N-linked (GlcNAc...) asparagine glycan. Transmembrane regions (helical) follow at residues 231–251 (GALC…IYLV), 253–273 (YVLM…LLTF), 288–308 (VALC…ALTW), 335–355 (IIAV…GIYQ), 356–376 (LLIF…IPLF), 393–413 (FLEF…IIFV), and 441–461 (VLLI…ATPL). A disordered region spans residues 498 to 518 (TEEESIGGQEQLSGPGKSAES). N-linked (GlcNAc...) asparagine glycosylation is present at Asn-550. The segment at 614–662 (AEKEDDEGDSWEPEESSKGVPGSTSSLTSDGPGSFRSLSGKSDEGGNGA) is disordered. Residues 617–627 (EDDEGDSWEPE) show a composition bias toward acidic residues. The span at 635–653 (GSTSSLTSDGPGSFRSLSG) shows a compositional bias: polar residues. Phosphoserine is present on residues Ser-647 and Ser-664. Disordered regions lie at residues 742 to 768 (QIHS…GGQR) and 787 to 808 (GPSR…TLPS). The segment covering 759 to 768 (NIDSSYGGQR) has biased composition (polar residues). Thr-818 carries the phosphothreonine modification. Positions 836 to 856 (GSSSLNGQMDSPAPISPSLGP) are disordered. Asn-891 is a glycosylation site (N-linked (GlcNAc...) asparagine). The residue at position 923 (Ser-923) is a Phosphoserine. Asn-1027 carries N-linked (GlcNAc...) asparagine glycosylation. Residues 1210 to 1229 (HRSSPPVSNGMLPPASKPGR) form a disordered region. Residues 1262–1269 (DVAFPKGK) carry the Nuclear localization signal motif.

It belongs to the NRAMP (TC 2.A.55) family.

The protein resides in the endoplasmic reticulum membrane. The protein localises to the nucleus. It is found in the cytoplasm. Its function is as follows. Central factor in signaling pathways regulated by ethylene (ET) and involved in various processes including development, plant defense, senescence, nucleotide sugar flux, and tropisms. Functionally, trafficking signal inducing ethylene response. The nuclear localization is both necessary and sufficient to activate EIN3-mediated transcription and ethylene responses. This is Ethylene-insensitive protein 2.2 from Populus trichocarpa (Western balsam poplar).